Consider the following 362-residue polypeptide: Probable secreted beta-glucosidase UTH1 (362 aa).

The signal sequence occupies residues methionine 1 to alanine 17.

Belongs to the SUN family.

It is found in the mitochondrion outer membrane. It localises to the secreted. The protein resides in the cell wall. Involved in aging, oxidative stress response, and in the regulation of mitochondrial biogenesis. Inactivation of UTH1 increases life span, leads to higher resistance to heat stress and to hydrogen peroxide, and increases sensitivity to the superoxide radical-generating drug paraquat and to copper. Also required for the selective autophagic degradation of mitochondria (mitophagy) in response to nitrogen starvation. Involved in the remodeling of the cell wall during the various phases of yeast culture development and under various environmental conditions and plays a role in septation. Involved in cell sensitivity to boric acid. This chain is Probable secreted beta-glucosidase UTH1 (UTH1), found in Saccharomyces cerevisiae (strain RM11-1a) (Baker's yeast).